A 335-amino-acid polypeptide reads, in one-letter code: Methionine import ATP-binding protein MetN 1 (335 aa).

In terms of domain architecture, ABC transporter spans I2 to V242. G38–S45 serves as a coordination point for ATP.

Belongs to the ABC transporter superfamily. Methionine importer (TC 3.A.1.24) family. In terms of assembly, the complex is composed of two ATP-binding proteins (MetN), two transmembrane proteins (MetI) and a solute-binding protein (MetQ).

It localises to the cell inner membrane. The catalysed reaction is L-methionine(out) + ATP + H2O = L-methionine(in) + ADP + phosphate + H(+). The enzyme catalyses D-methionine(out) + ATP + H2O = D-methionine(in) + ADP + phosphate + H(+). Part of the ABC transporter complex MetNIQ involved in methionine import. Responsible for energy coupling to the transport system. The polypeptide is Methionine import ATP-binding protein MetN 1 (Pseudomonas fluorescens (strain ATCC BAA-477 / NRRL B-23932 / Pf-5)).